The chain runs to 72 residues: Translation initiation factor IF-1 (72 aa).

The 72-residue stretch at 1–72 (MAKEDTLEFP…TKGRINYRFK (72 aa)) folds into the S1-like domain.

It belongs to the IF-1 family. As to quaternary structure, component of the 30S ribosomal translation pre-initiation complex which assembles on the 30S ribosome in the order IF-2 and IF-3, IF-1 and N-formylmethionyl-tRNA(fMet); mRNA recruitment can occur at any time during PIC assembly.

The protein localises to the cytoplasm. Its function is as follows. One of the essential components for the initiation of protein synthesis. Stabilizes the binding of IF-2 and IF-3 on the 30S subunit to which N-formylmethionyl-tRNA(fMet) subsequently binds. Helps modulate mRNA selection, yielding the 30S pre-initiation complex (PIC). Upon addition of the 50S ribosomal subunit IF-1, IF-2 and IF-3 are released leaving the mature 70S translation initiation complex. This chain is Translation initiation factor IF-1, found in Ruegeria sp. (strain TM1040) (Silicibacter sp.).